The primary structure comprises 104 residues: L-rhamnose mutarotase (104 aa).

A substrate-binding site is contributed by Tyr-18. His-22 functions as the Proton donor in the catalytic mechanism. Substrate contacts are provided by residues Tyr-41 and 76-77; that span reads WW.

It belongs to the rhamnose mutarotase family. Homodimer.

It is found in the cytoplasm. The enzyme catalyses alpha-L-rhamnose = beta-L-rhamnose. The protein operates within carbohydrate metabolism; L-rhamnose metabolism. Involved in the anomeric conversion of L-rhamnose. In Oceanobacillus iheyensis (strain DSM 14371 / CIP 107618 / JCM 11309 / KCTC 3954 / HTE831), this protein is L-rhamnose mutarotase.